Consider the following 196-residue polypeptide: ATP-dependent Clp protease proteolytic subunit (196 aa).

The active-site Nucleophile is Ser-101. His-126 is a catalytic residue.

It belongs to the peptidase S14 family. As to quaternary structure, component of the chloroplastic Clp protease core complex.

The protein localises to the plastid. It is found in the chloroplast stroma. The enzyme catalyses Hydrolysis of proteins to small peptides in the presence of ATP and magnesium. alpha-casein is the usual test substrate. In the absence of ATP, only oligopeptides shorter than five residues are hydrolyzed (such as succinyl-Leu-Tyr-|-NHMec, and Leu-Tyr-Leu-|-Tyr-Trp, in which cleavage of the -Tyr-|-Leu- and -Tyr-|-Trp bonds also occurs).. Its function is as follows. Cleaves peptides in various proteins in a process that requires ATP hydrolysis. Has a chymotrypsin-like activity. Plays a major role in the degradation of misfolded proteins. The chain is ATP-dependent Clp protease proteolytic subunit from Lepidium virginicum (Virginia pepperweed).